A 139-amino-acid polypeptide reads, in one-letter code: Large ribosomal subunit protein uL16 (139 aa).

The protein belongs to the universal ribosomal protein uL16 family. Part of the 50S ribosomal subunit.

Its function is as follows. Binds 23S rRNA and is also seen to make contacts with the A and possibly P site tRNAs. This is Large ribosomal subunit protein uL16 from Crocosphaera subtropica (strain ATCC 51142 / BH68) (Cyanothece sp. (strain ATCC 51142)).